The chain runs to 2499 residues: Probable polyketide synthase 23 (2499 aa).

In terms of domain architecture, Ketosynthase family 3 (KS3) spans 11–430 (DNQVAIVGLG…GSNACVLLSE (420 aa)). Residues Cys177, His316, and His354 each act as for beta-ketoacyl synthase activity in the active site. Residues 623 to 656 (GITPSIIVGHSLGEVASAFCSGMIDLETACFVIY) form an acyl/malonyl transferases region. The active-site For acyl/malonyl transferase activity is the Ser633. The tract at residues 924–1044 (INQLGNKNEL…SRILMKSLDV (121 aa)) is N-terminal hotdog fold. Positions 924–1209 (INQLGNKNEL…IASTLSTNID (286 aa)) constitute a PKS/mFAS DH domain. His956 serves as the catalytic Proton acceptor; for dehydratase activity. The interval 1059 to 1209 (NWSTLKREQL…IASTLSTNID (151 aa)) is C-terminal hotdog fold. The active-site Proton donor; for dehydratase activity is the Asp1121. The region spanning 2414–2491 (EKEFSIRQDI…QIINIVTTKV (78 aa)) is the Carrier domain. Ser2451 bears the O-(pantetheine 4'-phosphoryl)serine mark.

Pantetheine 4'-phosphate is required as a cofactor.

Probable polyketide synthase. The sequence is that of Probable polyketide synthase 23 (pks23) from Dictyostelium discoideum (Social amoeba).